Reading from the N-terminus, the 58-residue chain is UPF0339 protein TDE_0826 (58 aa).

This sequence belongs to the UPF0339 family.

The protein is UPF0339 protein TDE_0826 of Treponema denticola (strain ATCC 35405 / DSM 14222 / CIP 103919 / JCM 8153 / KCTC 15104).